We begin with the raw amino-acid sequence, 48 residues long: uncharacterized protein (48 aa).

The disordered stretch occupies residues 1 to 48 (MLFCNNNNNNNNNNNNNNNNNNNNNNNNNNNNNNNNNNNSSNNNNFSR).

This is an uncharacterized protein from Dictyostelium discoideum (Social amoeba).